Reading from the N-terminus, the 143-residue chain is 18.1 kDa class I heat shock protein (143 aa).

In terms of domain architecture, sHSP spans 29–143; sequence ENSAFVSTRI…PEVKSIEISS (115 aa).

The protein belongs to the small heat shock protein (HSP20) family. As to quaternary structure, forms oligomeric structures.

The protein localises to the cytoplasm. This Medicago sativa (Alfalfa) protein is 18.1 kDa class I heat shock protein (HSP18.1).